Reading from the N-terminus, the 318-residue chain is Thymidylate synthase (318 aa).

DUMP contacts are provided by residues Arg25 and 180-181 (RR). Cys200 serves as the catalytic Nucleophile. DUMP contacts are provided by residues 220–223 (RSGD), Asn231, and 261–263 (HIY). Asp223 lines the (6R)-5,10-methylene-5,6,7,8-tetrahydrofolate pocket. Residue Ala317 coordinates (6R)-5,10-methylene-5,6,7,8-tetrahydrofolate.

This sequence belongs to the thymidylate synthase family. Bacterial-type ThyA subfamily. Homodimer.

The protein localises to the cytoplasm. The enzyme catalyses dUMP + (6R)-5,10-methylene-5,6,7,8-tetrahydrofolate = 7,8-dihydrofolate + dTMP. It participates in pyrimidine metabolism; dTTP biosynthesis. Its function is as follows. Catalyzes the reductive methylation of 2'-deoxyuridine-5'-monophosphate (dUMP) to 2'-deoxythymidine-5'-monophosphate (dTMP) while utilizing 5,10-methylenetetrahydrofolate (mTHF) as the methyl donor and reductant in the reaction, yielding dihydrofolate (DHF) as a by-product. This enzymatic reaction provides an intracellular de novo source of dTMP, an essential precursor for DNA biosynthesis. This chain is Thymidylate synthase, found in Lactobacillus helveticus (strain DPC 4571).